A 375-amino-acid chain; its full sequence is Putative type I specificity subunit S.MpnORF638P (375 aa).

It belongs to the type-I restriction system S methylase family. As to quaternary structure, the methyltransferase is composed of M and S polypeptides.

In terms of biological role, the specificity (S) subunit of a type I methyltransferase (MTase); this subunit dictates DNA sequence specificity. The single R subunit has multiple frameshifts and is probably not expressed. The polypeptide is Putative type I specificity subunit S.MpnORF638P (Mycoplasma pneumoniae (strain ATCC 29342 / M129 / Subtype 1) (Mycoplasmoides pneumoniae)).